The primary structure comprises 72 residues: Translation initiation factor IF-1 (72 aa).

In terms of domain architecture, S1-like spans 1-72 (MPKDDSIEVE…TRGRITYRAK (72 aa)).

This sequence belongs to the IF-1 family. Component of the 30S ribosomal translation pre-initiation complex which assembles on the 30S ribosome in the order IF-2 and IF-3, IF-1 and N-formylmethionyl-tRNA(fMet); mRNA recruitment can occur at any time during PIC assembly.

The protein resides in the cytoplasm. In terms of biological role, one of the essential components for the initiation of protein synthesis. Stabilizes the binding of IF-2 and IF-3 on the 30S subunit to which N-formylmethionyl-tRNA(fMet) subsequently binds. Helps modulate mRNA selection, yielding the 30S pre-initiation complex (PIC). Upon addition of the 50S ribosomal subunit IF-1, IF-2 and IF-3 are released leaving the mature 70S translation initiation complex. The chain is Translation initiation factor IF-1 from Myxococcus xanthus (strain DK1622).